A 113-amino-acid polypeptide reads, in one-letter code: Kita-kyushu lung cancer antigen 1 (113 aa).

The Cytoplasmic segment spans residues 1-3 (MNF). The chain crosses the membrane as a helical; Signal-anchor for type II membrane protein span at residues 4–21 (YLLLASSILCALIVFWKY). The Extracellular portion of the chain corresponds to 22 to 113 (RRFQRNTGEM…RGASPHRKST (92 aa)). A glycan (N-linked (GlcNAc...) asparagine) is linked at Asn-83.

As to expression, specifically expressed in testis. Expressed by cancer cell lines.

The protein resides in the cell membrane. The sequence is that of Kita-kyushu lung cancer antigen 1 (CT83) from Homo sapiens (Human).